Consider the following 101-residue polypeptide: MAKLALIEREKKRARLVAKFAAKREALKAIVEDQSKSEEERYEARLELQQLPRNANPTRQRNRCAITGRPRGTFRKFGLARNKIREIAFRGEIPGLTKASW.

This sequence belongs to the universal ribosomal protein uS14 family. As to quaternary structure, part of the 30S ribosomal subunit. Contacts proteins S3 and S10.

In terms of biological role, binds 16S rRNA, required for the assembly of 30S particles and may also be responsible for determining the conformation of the 16S rRNA at the A site. This Burkholderia ambifaria (strain MC40-6) protein is Small ribosomal subunit protein uS14.